Reading from the N-terminus, the 155-residue chain is F-box only protein 48 (155 aa).

The disordered stretch occupies residues 1–27 (MHKNSKRNNNLRVSHTEANSVDAEKEK). A compositionally biased stretch (polar residues) spans 7–19 (RNNNLRVSHTEAN). The F-box domain occupies 32 to 79 (NNFFELLPAEITFKIFSQLDIRSLCRASLTCRSWNDTIRNSDSLWKPH).

This chain is F-box only protein 48 (FBXO48), found in Homo sapiens (Human).